Here is a 1602-residue protein sequence, read N- to C-terminus: Calmodulin-regulated spectrin-associated protein 1 (1602 aa).

Positions 216 to 331 constitute a Calponin-homology (CH) domain; sequence ESPAHQKVRY…FIAELFWWFE (116 aa). Serine 217, serine 371, serine 375, serine 416, and serine 431 each carry phosphoserine. The interval 426–471 is disordered; it reads QKQQKSIQGEDIPDQRHRSNSLTRVDGQPRGAAIAWPEKKTRPASQ. Threonine 512 is subject to Phosphothreonine. 3 positions are modified to phosphoserine: serine 563, serine 575, and serine 589. Over residues 603–620 the composition is skewed to basic and acidic residues; the sequence is AKEKQVITKEDERGEGRP. The interval 603 to 637 is disordered; that stretch reads AKEKQVITKEDERGEGRPRSIVSRRPSEGPQPLVR. Residues serine 629, serine 722, serine 728, serine 738, and serine 740 each carry the phosphoserine modification. Residues 772 to 789 are compositionally biased toward basic and acidic residues; sequence KLQEDMKVKEHEDKDDAS. Disordered stretches follow at residues 772-808 and 825-870; these read KLQE…VSMA and LNSC…GKDP. Composition is skewed to low complexity over residues 797-808 and 830-841; these read STASQMSSVSMA and TKSSTSSSQKTT. Over residues 857–869 the composition is skewed to basic and acidic residues; sequence QKREQSPSQHGKD. Residues 871-892 are sufficient for interaction with SPTBN1; it reads ASLLASELVQLHMQLEEKRRAI. Coiled coils occupy residues 873-909 and 1016-1048; these read LLAS…QRLK and DVNE…QEQL. The segment at 903–922 is sufficient for interaction with calmodulin; it reads SARQRLKLGKAAFLHVVKKG. 3 disordered regions span residues 1075–1165, 1206–1226, and 1301–1448; these read FVEP…GKCL, KEVG…VEEP, and ARVR…DWET. At serine 1080 the chain carries Phosphoserine. Residues 1103 to 1114 show a composition bias toward basic and acidic residues; that stretch reads RPAELKVPKDRP. The segment covering 1115-1127 has biased composition (polar residues); sequence QGSSRSKTPTPSV. Over residues 1206–1220 the composition is skewed to low complexity; the sequence is KEVGSSSSDVSGKES. Residues 1291–1343 are a coiled coil; that stretch reads LLKQQRKAEEARVRKQQLEAEVELKRDEARRKAEEDRVRKEEEKARRELIKQE. Basic and acidic residues predominate over residues 1301–1346; that stretch reads ARVRKQQLEAEVELKRDEARRKAEEDRVRKEEEKARRELIKQEYLR. A compositionally biased stretch (basic residues) spans 1361 to 1372; sequence PKSKPKKPRPKS. The span at 1380-1392 shows a compositional bias: polar residues; it reads SDSGTKCSSTPDN. A compositionally biased stretch (low complexity) spans 1393–1410; that stretch reads LSRTQSGSSLSLASAATT. A phosphoserine mark is found at serine 1398 and serine 1427. The region spanning 1463 to 1597 is the CKK domain; the sequence is GPKLFKEPSS…QPKRPAVPKK (135 aa). Tyrosine 1537 carries the phosphotyrosine modification.

The protein belongs to the CAMSAP1 family. In terms of assembly, interacts with spectrin via SPTBN1; the interaction is direct. Interacts with calmodulin; calcium-dependent it prevents interaction with spectrin.

Its subcellular location is the cytoplasm. The protein localises to the cytoskeleton. In terms of biological role, key microtubule-organizing protein that specifically binds the minus-end of non-centrosomal microtubules and regulates their dynamics and organization. Specifically recognizes growing microtubule minus-ends and stabilizes microtubules. Acts on free microtubule minus-ends that are not capped by microtubule-nucleating proteins or other factors and protects microtubule minus-ends from depolymerization. In contrast to CAMSAP2 and CAMSAP3, tracks along the growing tips of minus-end microtubules without significantly affecting the polymerization rate: binds at the very tip of the microtubules minus-end and acts as a minus-end tracking protein (-TIP) that dissociates from microtubules after allowing tubulin incorporation. Through interaction with spectrin may regulate neurite outgrowth. The chain is Calmodulin-regulated spectrin-associated protein 1 (CAMSAP1) from Homo sapiens (Human).